Reading from the N-terminus, the 348-residue chain is MAVRIDGSYGEGGGQILRTSIALSALLGRPVEIVNIRAKRANPGLQPQHLTGVKVAALLTDAEVKGAEKGSTRLYFEPKTLKCGNFSIDIGTAGSISLIVQTLAPILLYAPCPTQITVTGGTDVAWAPPIDYMRFVFTKVLERFGAKLSIELIRRGHYPRGGGRAVVRAEPVKRLKAVESEEFGNVVKISGISHAVNLPPHVAERQAKAAREELSKMGLDADIAIEVRNDGLGPGSGVVIWAVSDAGNVIGGDSLGERGKPAETVGKEAAQKLIAVLKTRASVDPHMADMAVLYMALAEGRSRISTSEETMHLKTNMYIIEQFLRVKFSTMEKAGRYTIEVEGVGYNR.

ATP-binding positions include Gln-101 and His-286–Asp-289. The active-site Tele-AMP-histidine intermediate is the His-312.

Belongs to the RNA 3'-terminal cyclase family. Type 1 subfamily.

It is found in the cytoplasm. The catalysed reaction is a 3'-end 3'-phospho-ribonucleotide-RNA + ATP = a 3'-end 2',3'-cyclophospho-ribonucleotide-RNA + AMP + diphosphate. Functionally, catalyzes the conversion of 3'-phosphate to a 2',3'-cyclic phosphodiester at the end of RNA. The mechanism of action of the enzyme occurs in 3 steps: (A) adenylation of the enzyme by ATP; (B) transfer of adenylate to an RNA-N3'P to produce RNA-N3'PP5'A; (C) and attack of the adjacent 2'-hydroxyl on the 3'-phosphorus in the diester linkage to produce the cyclic end product. The biological role of this enzyme is unknown but it is likely to function in some aspects of cellular RNA processing. The polypeptide is RNA 3'-terminal phosphate cyclase (Pyrobaculum aerophilum (strain ATCC 51768 / DSM 7523 / JCM 9630 / CIP 104966 / NBRC 100827 / IM2)).